Reading from the N-terminus, the 287-residue chain is Pyridoxal kinase PdxY (287 aa).

Residues Ser-9 and 44 to 45 (TQ) contribute to the substrate site. 3 residues coordinate ATP: Asp-111, Glu-147, and Lys-180. Asp-221 contributes to the substrate binding site.

The protein belongs to the pyridoxine kinase family. PdxY subfamily. In terms of assembly, homodimer. Requires Mg(2+) as cofactor.

It carries out the reaction pyridoxal + ATP = pyridoxal 5'-phosphate + ADP + H(+). Its pathway is cofactor metabolism; pyridoxal 5'-phosphate salvage; pyridoxal 5'-phosphate from pyridoxal: step 1/1. Pyridoxal kinase involved in the salvage pathway of pyridoxal 5'-phosphate (PLP). Catalyzes the phosphorylation of pyridoxal to PLP. This chain is Pyridoxal kinase PdxY, found in Paraburkholderia phymatum (strain DSM 17167 / CIP 108236 / LMG 21445 / STM815) (Burkholderia phymatum).